The primary structure comprises 603 residues: Bud site selection protein 8 (603 aa).

Residues 1-10 (MIQSDEDNLD) show a composition bias toward acidic residues. Disordered stretches follow at residues 1–25 (MIQS…GTSS), 83–150 (ASTS…SPSS), and 190–212 (ANRG…EPNE). Topologically, residues 1–515 (MIQSDEDNLD…GFRDVYSIEN (515 aa)) are extracellular. Composition is skewed to low complexity over residues 11 to 25 (SSET…GTSS) and 84 to 95 (STSSSSSSNSSS). Asn92, Asn110, Asn211, Asn240, Asn271, and Asn333 each carry an N-linked (GlcNAc...) asparagine glycan. Positions 96 to 115 (ITQFHDTQDNNIPSNTTVRP) are enriched in polar residues. The interval 286–479 (AGSIKSSTSD…NRKEDRHDAE (194 aa)) is disordered. A compositionally biased stretch (low complexity) spans 325–335 (PSHNSDSSNES). The span at 336–350 (SPKDHIGHNNEEKFS) shows a compositional bias: basic and acidic residues. Residues Asn396 and Asn423 are each glycosylated (N-linked (GlcNAc...) asparagine). Polar residues predominate over residues 439 to 452 (KSQSSESDTGQNSI). Residues 463-479 (KQQEKTDNRKEDRHDAE) show a composition bias toward basic and acidic residues. The chain crosses the membrane as a helical span at residues 516–536 (IIVILLCCSIVPPLFFIIGCS). At 537–577 (SRRKLVSDYRLMRLLMNKEHRAALLQGFIWDVDLRWFRMFC) the chain is on the cytoplasmic side. A helical membrane pass occupies residues 578-598 (LILGAAETVIVMAGIAIGFGV). Residues 599–603 (GITRE) lie on the Extracellular side of the membrane.

This sequence belongs to the BUD8/9 family. As to quaternary structure, interacts with RAX1 RAX2 at the proximal or distal pole in unbudded cells. In terms of processing, N- and O-glycosylated.

It is found in the cell membrane. It localises to the bud tip. Functionally, involved in positioning the distal bud pole signal. The protein is Bud site selection protein 8 of Saccharomyces cerevisiae (strain ATCC 204508 / S288c) (Baker's yeast).